Consider the following 373-residue polypeptide: Arabinonate dehydratase (373 aa).

Mg(2+) contacts are provided by D199, E225, and E251.

This sequence belongs to the mandelate racemase/muconate lactonizing enzyme family. In terms of assembly, homooctamer. Mg(2+) is required as a cofactor.

It carries out the reaction D-arabinonate = 2-dehydro-3-deoxy-D-arabinonate + H2O. Inhibited by substrate levels above 8 mM. Catalyzes the dehydration of D-arabinonate to 2-keto-3-deoxy-D-arabinonate. Participates in a pentose oxidation pathway that converts D-arabinonate to 2-oxoglutarate. This chain is Arabinonate dehydratase, found in Saccharolobus solfataricus (strain ATCC 35092 / DSM 1617 / JCM 11322 / P2) (Sulfolobus solfataricus).